Here is an 87-residue protein sequence, read N- to C-terminus: Small ribosomal subunit protein uS17 (87 aa).

This sequence belongs to the universal ribosomal protein uS17 family. As to quaternary structure, part of the 30S ribosomal subunit.

In terms of biological role, one of the primary rRNA binding proteins, it binds specifically to the 5'-end of 16S ribosomal RNA. The polypeptide is Small ribosomal subunit protein uS17 (Staphylococcus aureus (strain Mu3 / ATCC 700698)).